A 492-amino-acid polypeptide reads, in one-letter code: uncharacterized protein (492 aa).

Transmembrane regions (helical) follow at residues Leu-13–Gly-33, Gly-42–Leu-62, Phe-97–Leu-117, Gly-150–Ile-170, Ile-180–Pro-200, Val-222–Ile-242, Ala-258–Gly-278, Phe-320–Val-340, Leu-359–Leu-379, Gly-391–Gly-411, Val-428–Leu-448, and Thr-463–Leu-483.

The protein belongs to the sodium:neurotransmitter symporter (SNF) (TC 2.A.22) family.

It is found in the cell membrane. Putative sodium-dependent transporter. This is an uncharacterized protein from Methanocaldococcus jannaschii (strain ATCC 43067 / DSM 2661 / JAL-1 / JCM 10045 / NBRC 100440) (Methanococcus jannaschii).